Consider the following 351-residue polypeptide: N-terminal EF-hand calcium-binding protein 1 (351 aa).

The residue at position 4 (Ser4) is a Phosphoserine. EF-hand domains are found at residues Lys26–Ser61 and Leu60–Glu95. 5 residues coordinate Ca(2+): Asp39, Asn41, Asp43, Lys45, and Glu50. Residues Leu135 to Gln163 are a coiled coil. The tract at residues Gly180 to Ser203 is disordered. Over residues His190 to Val202 the composition is skewed to polar residues. Ser192 and Ser197 each carry phosphoserine. The stretch at Glu209–Tyr275 forms a coiled coil. Residues Met252–Met340 form the ABM domain.

As to quaternary structure, interacts with STX1. May interact with CPNE6. As to expression, expressed in brain (at protein level).

It is found in the cytoplasm. This chain is N-terminal EF-hand calcium-binding protein 1 (NECAB1), found in Homo sapiens (Human).